The sequence spans 92 residues: Muscle LIM protein 1 (92 aa).

An LIM zinc-binding domain is found at 11–62; sequence CPACGKSVYAAEERVAGGYKFHKTCFKCSMCNKALDSTNCTEHEKELFCKNC. A Nuclear localization signal motif is present at residues 65–70; that stretch reads RKYGPK.

In the embryo, expression is restricted to the somatic, visceral, and pharyngeal muscles. Within the somatic musculature, MLP60 is distributed throughout the muscle fibers. There is no expression in cardiac mesoderm or in fat body.

Its subcellular location is the cytoplasm. The protein localises to the nucleus. Functionally, positive regulator of myogenesis. This chain is Muscle LIM protein 1 (Mlp60A), found in Drosophila melanogaster (Fruit fly).